The chain runs to 300 residues: Glycine betaine/carnitine transport binding protein GbuC (300 aa).

The N-terminal stretch at 1 to 20 (MLKKLITTAVLAMLIFTLAA) is a signal peptide. Cysteine 21 carries N-palmitoyl cysteine lipidation. Cysteine 21 carries S-diacylglycerol cysteine lipidation.

As to quaternary structure, the complex is composed of two ATP-binding proteins (GbuA), two transmembrane proteins (GbuB) and a solute-binding protein (GbuC).

It is found in the cell membrane. Its activity is regulated as follows. The complex is activated by an osmotic gradient or by low temperature. Part of the ABC transporter complex GbuABC involved in glycine betaine uptake. Involved, with BetL and OpuC, in osmoprotection and cryoprotection of Listeria. Can also uptake carnitine when carnitine is abundant in the growth medium. In Listeria monocytogenes serotype 1/2a (strain 10403S), this protein is Glycine betaine/carnitine transport binding protein GbuC (gbuC).